The sequence spans 134 residues: Holo-[acyl-carrier-protein] synthase (134 aa).

Aspartate 8 and glutamate 57 together coordinate Mg(2+).

This sequence belongs to the P-Pant transferase superfamily. AcpS family. The cofactor is Mg(2+).

It is found in the cytoplasm. The enzyme catalyses apo-[ACP] + CoA = holo-[ACP] + adenosine 3',5'-bisphosphate + H(+). Transfers the 4'-phosphopantetheine moiety from coenzyme A to a Ser of acyl-carrier-protein. This Rhizobium leguminosarum bv. trifolii (strain WSM2304) protein is Holo-[acyl-carrier-protein] synthase.